A 410-amino-acid chain; its full sequence is Transcription factor Dp-1 (410 aa).

N6-acetyllysine is present on K3. S23 bears the Phosphoserine; by CDK2 mark. The segment at V77–K114 is disordered. The span at H82–S95 shows a compositional bias: polar residues. The span at K104 to K114 shows a compositional bias: basic residues. The tract at residues R105–V127 is interaction with CEBPA. The DNA-binding element occupies G113 to P195. The DEF box signature appears at D161–P195. Residues S204–S277 form a dimerization region. An enhances binding of RB protein to E2F region spans residues R211–P327. Residues E214–Q246 are DCB1. The segment at L259–S315 is DCB2. Residues G370–D410 form a disordered region. Residues S375 to S384 show a composition bias toward low complexity. Residues G394 to D410 show a composition bias toward acidic residues.

This sequence belongs to the E2F/DP family. As to quaternary structure, component of the E2F:DP transcription factor complex. Forms heterodimers with E2F family members. The complex can interact with hypophosphorylated retinoblastoma protein RB1 and related proteins (RBL1 and RBL2) that inhibit the E2F transactivation domain. This repression involves recruitment of histone deacetylase (HDAC). During the cell cycle, from mid-to-late G1 phase, RB family members become phosphorylated, detach from the DRTF1/E2F complex to render E2F transcriptionally active. Part of the E2F6.com-1 complex in G0 phase is composed of E2F6, MGA, MAX, TFDP1, CBX3, BAT8, EUHMTASE1, RING1, RNF2, MBLR, L3MBTL2 YAF2. Component of the DREAM complex (also named LINC complex) at least composed of E2F4, E2F5, LIN9, LIN37, LIN52, LIN54, MYBL1, MYBL2, RBL1, RBL2, RBBP4, TFDP1 and TFDP2. The complex exists in quiescent cells where it represses cell cycle-dependent genes. It dissociates in S phase when LIN9, LIN37, LIN52 and LIN54 form a subcomplex that binds to MYBL2. The complex TFDP1:E2F1 interacts with CEBPA; the interaction prevents CEBPA binding to target gene promoters and represses its transcriptional activity. Ubiquitinated by the BCR(KBTBD5) complex, leading to its subsequent degradation. Post-translationally, phosphorylation by E2F1-bound cyclin A-CDK2, in the S phase, inhibits E2F-mediated DNA binding and transactivation.

The protein resides in the nucleus. Its subcellular location is the cytoplasm. In terms of biological role, can stimulate E2F-dependent transcription. Binds DNA cooperatively with E2F family members through the E2 recognition site, 5'-TTTC[CG]CGC-3', found in the promoter region of a number of genes whose products are involved in cell cycle regulation or in DNA replication. The E2F1:DP complex appears to mediate both cell proliferation and apoptosis. Blocks adipocyte differentiation by repressing CEBPA binding to its target gene promoters. This is Transcription factor Dp-1 (TFDP1) from Bos taurus (Bovine).